The sequence spans 80 residues: U4-theraphotoxin-Spl1a (80 aa).

The signal sequence occupies residues 1-21 (MKASLFAVIFGLVVLCACSFA). A propeptide spanning residues 22–50 (EDQFASPNELLKSMFVESTHELTPEVEGR) is cleaved from the precursor. 3 disulfide bridges follow: Cys52/Cys66, Cys59/Cys71, and Cys65/Cys75. A Leucine amide modification is found at Leu79.

Belongs to the neurotoxin 30 (phrixotoxin) family. Expressed by the venom gland.

It is found in the secreted. Functionally, probable ion channel inhibitor. Shows insecticidal activity when injected into mealworms. This chain is U4-theraphotoxin-Spl1a, found in Selenotypus plumipes (Australian featherleg tarantula).